The sequence spans 525 residues: Peptide chain release factor 3 (525 aa).

Residues 11–279 (NNRRTFAIIS…AYLKYAPKPA (269 aa)) form the tr-type G domain. Residues 20–27 (SHPDAGKT), 88–92 (DTPGH), and 142–145 (NKLD) each bind GTP.

Belongs to the TRAFAC class translation factor GTPase superfamily. Classic translation factor GTPase family. PrfC subfamily.

It localises to the cytoplasm. Its function is as follows. Increases the formation of ribosomal termination complexes and stimulates activities of RF-1 and RF-2. It binds guanine nucleotides and has strong preference for UGA stop codons. It may interact directly with the ribosome. The stimulation of RF-1 and RF-2 is significantly reduced by GTP and GDP, but not by GMP. The polypeptide is Peptide chain release factor 3 (Ligilactobacillus salivarius (strain UCC118) (Lactobacillus salivarius)).